The sequence spans 876 residues: Monofunctional isopimaradiene synthase, chloroplastic (876 aa).

The transit peptide at 1–64 (MAMPSYSSLS…YLRLGSRKII (64 aa)) directs the protein to the chloroplast. The Mg(2+) site is built by Asp628, Asp632, Asn772, Thr776, and Glu780. The DDXXD motif motif lies at 628–632 (DDLYD).

It belongs to the terpene synthase family. Tpsd subfamily. Mg(2+) is required as a cofactor.

Its subcellular location is the plastid. It is found in the chloroplast. The enzyme catalyses (+)-copalyl diphosphate = isopimara-7,15-diene + diphosphate. The protein operates within terpene metabolism; oleoresin biosynthesis. Involved in defensive oleoresin formation in conifers in response to insect attack or other injury. Involved in diterpene (C20) olefins biosynthesis. Monofunctional enzyme lacking the DXDD motif in the class II active site relevant for the cyclization of geranylgeranyl diphosphate (GGPP). Requires (+)-copalyl diphosphate ((+)-CPP) as substrate, but no activity with GGPP or ent-CPP. Isopimaradiene is the major products of the enzyme followed by sandaracopimaradiene. The sequence is that of Monofunctional isopimaradiene synthase, chloroplastic from Pinus contorta (Shore pine).